The sequence spans 204 residues: Urease accessory protein UreG (204 aa).

Position 11-18 (11-18) interacts with GTP; sequence GPVGAGKH.

The protein belongs to the SIMIBI class G3E GTPase family. UreG subfamily. Homodimer. UreD, UreF and UreG form a complex that acts as a GTP-hydrolysis-dependent molecular chaperone, activating the urease apoprotein by helping to assemble the nickel containing metallocenter of UreC. The UreE protein probably delivers the nickel.

It is found in the cytoplasm. Functionally, facilitates the functional incorporation of the urease nickel metallocenter. This process requires GTP hydrolysis, probably effectuated by UreG. This is Urease accessory protein UreG from Staphylococcus xylosus.